A 213-amino-acid polypeptide reads, in one-letter code: Putative manganese efflux pump MntP (213 aa).

6 consecutive transmembrane segments (helical) span residues 3 to 23 (ILSIVLTGFGLAMDAFAVSVA), 36 to 56 (ALKVALFFGGFQALMPLIGWG), 67 to 87 (AFDHWIAFILLGFIGGKMIFE), 130 to 150 (LAIATSIDALAVGVSFAFLGI), 152 to 172 (IVQTIIIIGIITFVLCFLGVI), and 187 to 207 (IVGGVILILIGINILLEHTGI).

It belongs to the MntP (TC 9.B.29) family.

The protein resides in the cell membrane. Functionally, probably functions as a manganese efflux pump. This Clostridium perfringens (strain ATCC 13124 / DSM 756 / JCM 1290 / NCIMB 6125 / NCTC 8237 / Type A) protein is Putative manganese efflux pump MntP.